The primary structure comprises 458 residues: Retinoic acid receptor RXR-beta (458 aa).

Residues 1–17 show a composition bias toward basic and acidic residues; it reads GEAGRDGMGDTGRDSRS. Residues 1–105 form a disordered region; it reads GEAGRDGMGD…GGSGPPEDVK (105 aa). A modulating region spans residues 1 to 129; it reads GEAGRDGMGD…PGGPGAGKRL (129 aa). Residues 18–31 are compositionally biased toward low complexity; it reads PDSSSPNPLSQGIP. Positions 32-56 are enriched in pro residues; the sequence is PSSPPGPPHTPSAPPPPMPPPPLGS. Residues 57 to 68 are compositionally biased toward low complexity; sequence PFPVISSSMGSP. The segment covering 69 to 78 has biased composition (pro residues); that stretch reads GLPPPAPPGF. 2 consecutive NR C4-type zinc fingers follow at residues 130 to 150 and 166 to 190; these read CAIC…CEGC and CRDN…YQKC. A DNA-binding region (nuclear receptor) is located at residues 130–195; it reads CAICGDRSSG…RYQKCLATGM (66 aa). The segment at 196 to 220 is hinge; the sequence is KREAVQEERQRGKDKDGDGDGAGGA. A compositionally biased stretch (basic and acidic residues) spans 201–213; sequence QEERQRGKDKDGD. Disordered regions lie at residues 201 to 223 and 238 to 261; these read QEER…APEE and QKSD…NDPV. The NR LBD domain occupies 221–454; sequence PEEMPVDRIL…TFLMEMLEAP (234 aa). Residues 245–255 are compositionally biased toward gly residues; that stretch reads EGPGATGGGGS.

It belongs to the nuclear hormone receptor family. NR2 subfamily. In terms of assembly, homodimer (in vitro). Heterodimer with other retinoic acid receptor family members. Binds DNA preferentially as a RAR/RXR heterodimer. Interacts with NR1H3. Interacts with AKAP13. Expressed in the adrenal gland with main expression in the zona fasciculata (at protein level).

The protein localises to the nucleus. Its subcellular location is the cytoplasm. In terms of biological role, receptor for retinoic acid. Retinoic acid receptors bind as heterodimers to their target response elements in response to their ligands, all-trans or 9-cis retinoic acid, and regulate gene expression in various biological processes. The RAR/RXR heterodimers bind to the retinoic acid response elements (RARE). The protein is Retinoic acid receptor RXR-beta (Rxrb) of Rattus norvegicus (Rat).